Reading from the N-terminus, the 78-residue chain is Surfactant-associated protein 2 (78 aa).

Residues 1–19 (MGSGLPLVLLLTLLGSSHG) form the signal peptide. An N-linked (GlcNAc...) asparagine glycan is attached at Asn-37.

In terms of processing, N-glycosylated. As to expression, predominantly expressed in lung, where it is detected in type II pneumocytes in the alveolus, and in nonciliated epithelium in bronchioli (at protein level). Also detected at lower levels in cervix, esophagus, stomach, testis and kidney.

The protein localises to the secreted. The protein resides in the cytoplasmic vesicle. It is found in the secretory vesicle. Its subcellular location is the golgi apparatus. Putative surfactant protein. The protein is Surfactant-associated protein 2 (SFTA2) of Homo sapiens (Human).